A 182-amino-acid chain; its full sequence is uncharacterized protein (182 aa).

The region spanning 1–170 (MIVKIIKGDI…IFVNIFEREL (170 aa)) is the Macro domain.

This is an uncharacterized protein from Sulfurisphaera tokodaii (strain DSM 16993 / JCM 10545 / NBRC 100140 / 7) (Sulfolobus tokodaii).